The sequence spans 287 residues: Bifunctional protein FolD (287 aa).

NADP(+) contacts are provided by residues 166–168 (GAS) and Ile232.

This sequence belongs to the tetrahydrofolate dehydrogenase/cyclohydrolase family. As to quaternary structure, homodimer.

The catalysed reaction is (6R)-5,10-methylene-5,6,7,8-tetrahydrofolate + NADP(+) = (6R)-5,10-methenyltetrahydrofolate + NADPH. The enzyme catalyses (6R)-5,10-methenyltetrahydrofolate + H2O = (6R)-10-formyltetrahydrofolate + H(+). The protein operates within one-carbon metabolism; tetrahydrofolate interconversion. Functionally, catalyzes the oxidation of 5,10-methylenetetrahydrofolate to 5,10-methenyltetrahydrofolate and then the hydrolysis of 5,10-methenyltetrahydrofolate to 10-formyltetrahydrofolate. The sequence is that of Bifunctional protein FolD from Buchnera aphidicola subsp. Baizongia pistaciae (strain Bp).